The chain runs to 532 residues: MSFPDFSASDAQIQWQRFCDLLWYHDDLGLWLDVSRMHLNASELEALQPAMDRAFTAMHELEAGAIANPDEERQVGHYWLRNPQLAPSDDLRTHIAREVDDIEAFGRGVVHGEIKAPSGVPFTDVLWIGIGGSGLGPALMIRALKNNNQGLPFHFLDNVDPNGMSNVLGGLAGRFKTTLVVTVSKSGGTPEPHIGMEQARLKLEAAGGKWAGQAVAITMLNSRLDQQAQQEAWLKRFDMFDWVGGRTSITSAVGLLPGALIGCDIRDFLAGAAQMDEATRVADSRRNPAALMAASWYVAGEGKGRRDMVVLPYRDRLEVFSRYLQQLVMESLGKRLDRDGNVVHQGIAVYGNKGSTDQHAYVQQLRDGVDNFFATFIEELEDSEDIPVIKNERPGDFLDGFLQGTRSALTEGGRQNMTITMRCFDERRLGALVALFERAVGLYGELVNVNAYHQPGVEAGKKAAAAILDLQQRVEEVLQDGVPRTVSEIRQVLDDGSDESIFWIMRHLTGNKRQYNAQGDWSSPAGMRFSKD.

The Proton donor role is filled by Glu330. Catalysis depends on residues His359 and Lys461.

This sequence belongs to the GPI family.

It is found in the cytoplasm. It catalyses the reaction alpha-D-glucose 6-phosphate = beta-D-fructose 6-phosphate. It participates in carbohydrate biosynthesis; gluconeogenesis. The protein operates within carbohydrate degradation; glycolysis; D-glyceraldehyde 3-phosphate and glycerone phosphate from D-glucose: step 2/4. In terms of biological role, catalyzes the reversible isomerization of glucose-6-phosphate to fructose-6-phosphate. The protein is Glucose-6-phosphate isomerase of Synechococcus sp. (strain CC9902).